Reading from the N-terminus, the 458-residue chain is Argininosuccinate lyase (458 aa).

It belongs to the lyase 1 family. Argininosuccinate lyase subfamily.

The protein resides in the cytoplasm. It catalyses the reaction 2-(N(omega)-L-arginino)succinate = fumarate + L-arginine. It participates in amino-acid biosynthesis; L-arginine biosynthesis; L-arginine from L-ornithine and carbamoyl phosphate: step 3/3. In Anoxybacillus flavithermus (strain DSM 21510 / WK1), this protein is Argininosuccinate lyase.